We begin with the raw amino-acid sequence, 888 residues long: Patched domain-containing protein 1 (888 aa).

Residues 20–40 (FIASHPVFFASAPVLISILLG) traverse the membrane as a helical segment. Asn77, Asn133, and Asn167 each carry an N-linked (GlcNAc...) asparagine glycan. The SSD domain maps to 268 to 427 (SERYLVTSLI…LSFYGSSLVF (160 aa)). The next 2 membrane-spanning stretches (helical) occupy residues 273–293 (VTSLILVVTMAILCCSMQDCV) and 298–318 (WLGLLGLVTISLATLTAAGII). 2 N-linked (GlcNAc...) asparagine glycosylation sites follow: Asn319 and Asn326. Transmembrane regions (helical) follow at residues 328 to 348 (TFLGVPFVMLGHGLYGTFEML), 373 to 393 (LSFSLTTAMYLVTFGIGASPF), 407 to 427 (CIAIFFNYLYVLSFYGSSLVF), and 502 to 522 (PFVVLFYLIYISFALMGYLQV). 3 N-linked (GlcNAc...) asparagine glycosylation sites follow: Asn568, Asn599, and Asn608. 2 helical membrane passes run 707 to 727 (ALFLLFFSAFLVADSLINVWI) and 738 to 758 (VIGFMTLWKVELDCISVLCLI). Asn762 is a glycosylation site (N-linked (GlcNAc...) asparagine). A helical transmembrane segment spans residues 795–815 (GVAILQSYLCYIVGLIPLAAV). The N-linked (GlcNAc...) asparagine glycan is linked to Asn818. A helical transmembrane segment spans residues 826 to 846 (CLFLIAFVTFFHCFAILPVIL).

This sequence belongs to the patched family. In terms of tissue distribution, widely expressed, including in various regions of the brain with highest expression in the gray and white cerebellum, followed by the cerebellar vermis and the pituitary gland.

It is found in the cell membrane. Its subcellular location is the cell projection. It localises to the dendritic spine. Functionally, required for the development and function of the thalamic reticular nucleus (TRN), a part of the thalamus that is critical for thalamocortical transmission, generation of sleep rhythms, sensorimotor processing and attention. Can bind cholesterol in vitro. The sequence is that of Patched domain-containing protein 1 from Homo sapiens (Human).